A 376-amino-acid polypeptide reads, in one-letter code: Chaperone protein DnaJ (376 aa).

The J domain occupies 4-70; the sequence is DYYQILGVSK…QKRAAYDRFG (67 aa). Residues 139 to 217 form a CR-type zinc finger; sequence GVEKNISFSS…CHGLGRYHKQ (79 aa). Residues Cys-152, Cys-155, Cys-169, Cys-172, Cys-191, Cys-194, Cys-205, and Cys-208 each coordinate Zn(2+). 4 CXXCXGXG motif repeats span residues 152 to 159, 169 to 176, 191 to 198, and 205 to 212; these read CDTCHGSG, CDACGGVG, CHKCQGNG, and CKKCHGLG.

It belongs to the DnaJ family. In terms of assembly, homodimer. It depends on Zn(2+) as a cofactor.

The protein localises to the cytoplasm. Participates actively in the response to hyperosmotic and heat shock by preventing the aggregation of stress-denatured proteins and by disaggregating proteins, also in an autonomous, DnaK-independent fashion. Unfolded proteins bind initially to DnaJ; upon interaction with the DnaJ-bound protein, DnaK hydrolyzes its bound ATP, resulting in the formation of a stable complex. GrpE releases ADP from DnaK; ATP binding to DnaK triggers the release of the substrate protein, thus completing the reaction cycle. Several rounds of ATP-dependent interactions between DnaJ, DnaK and GrpE are required for fully efficient folding. Also involved, together with DnaK and GrpE, in the DNA replication of plasmids through activation of initiation proteins. The chain is Chaperone protein DnaJ from Rickettsia bellii (strain RML369-C).